A 413-amino-acid polypeptide reads, in one-letter code: Probable aminotransferase sirI (413 aa).

Lys255 carries the post-translational modification N6-(pyridoxal phosphate)lysine.

It belongs to the class-I pyridoxal-phosphate-dependent aminotransferase family. Pyridoxal 5'-phosphate serves as cofactor.

The protein operates within mycotoxin biosynthesis. Probable aminotransferase; part of the gene cluster that mediates the biosynthesis of sirodesmin PL, an epipolythiodioxopiperazine (ETP) characterized by a disulfide bridged cyclic dipeptide and that acts as a phytotoxin which is involved in the blackleg didease of canola. SirD catalyzes the O-prenylation of L-tyrosine (L-Tyr) in the presence of dimethylallyl diphosphate (DMAPP) to yield 4-O-dimethylallyl-L-Tyr, and therefore represents probably the first pathway-specific enzyme in the biosynthesis of sirodesmin PL. 4-O-dimethylallyl-L-Tyr, then undergoes condensation with L-Ser in a reaction catalyzed by the non-ribosomal peptide synthase sirP to form the diketopiperazine (DKP) backbone. Further bishydroxylation of the DKP performed by the cytochrome P450 monooxygenase sirC leads to the production of the intermediate phomamide. This step is essential to form the reactive thiol group required for toxicity of sirodesmin PL. The next steps of sirodesmin biosynthesis are not well understood yet, but some predictions could be made from intermediate compounds identification. Phomamide is converted into phomalizarine via oxidation, probably by sirT. Further oxidation, methylation (by sirM or sirN) and reduction steps convert phomalizarine to deacetyl sirodesmin. Finally, acetyltransferase sirH probably acetylates deacetyl sirodesmin to produce sirodesmin PL. The protein is Probable aminotransferase sirI of Leptosphaeria maculans (Blackleg fungus).